The following is a 114-amino-acid chain: Probable 4-amino-4-deoxy-L-arabinose-phosphoundecaprenol flippase subunit ArnE (114 aa).

The next 3 helical transmembrane spans lie at 38-58, 64-84, and 94-114; these read LTLR…LLWL, LPLS…TLAA, and LRHW…SWHL. In terms of domain architecture, EamA spans 43–112; that stretch reads LAIAVVSLGL…IMFGILLMSW (70 aa).

It belongs to the ArnE family. As to quaternary structure, heterodimer of ArnE and ArnF.

The protein localises to the cell inner membrane. Its pathway is bacterial outer membrane biogenesis; lipopolysaccharide biosynthesis. In terms of biological role, translocates 4-amino-4-deoxy-L-arabinose-phosphoundecaprenol (alpha-L-Ara4N-phosphoundecaprenol) from the cytoplasmic to the periplasmic side of the inner membrane. The polypeptide is Probable 4-amino-4-deoxy-L-arabinose-phosphoundecaprenol flippase subunit ArnE (Yersinia pestis bv. Antiqua (strain Antiqua)).